A 511-amino-acid chain; its full sequence is Probable DNA ligase (511 aa).

Residue Glu209 coordinates ATP. The active-site N6-AMP-lysine intermediate is Lys211. ATP-binding residues include Arg216, Arg231, Glu260, Phe299, Arg371, and Lys377.

The protein belongs to the ATP-dependent DNA ligase family. It depends on Mg(2+) as a cofactor.

It carries out the reaction ATP + (deoxyribonucleotide)n-3'-hydroxyl + 5'-phospho-(deoxyribonucleotide)m = (deoxyribonucleotide)n+m + AMP + diphosphate.. In terms of biological role, DNA ligase that seals nicks in double-stranded DNA during DNA replication, DNA recombination and DNA repair. The protein is Probable DNA ligase of Mycolicibacterium gilvum (strain PYR-GCK) (Mycobacterium gilvum (strain PYR-GCK)).